A 110-amino-acid polypeptide reads, in one-letter code: Large ribosomal subunit protein uL22 (110 aa).

This sequence belongs to the universal ribosomal protein uL22 family. Part of the 50S ribosomal subunit.

Functionally, this protein binds specifically to 23S rRNA; its binding is stimulated by other ribosomal proteins, e.g. L4, L17, and L20. It is important during the early stages of 50S assembly. It makes multiple contacts with different domains of the 23S rRNA in the assembled 50S subunit and ribosome. Its function is as follows. The globular domain of the protein is located near the polypeptide exit tunnel on the outside of the subunit, while an extended beta-hairpin is found that lines the wall of the exit tunnel in the center of the 70S ribosome. This Alkaliphilus metalliredigens (strain QYMF) protein is Large ribosomal subunit protein uL22.